A 140-amino-acid polypeptide reads, in one-letter code: CDGSH iron-sulfur domain-containing protein 2 homolog (140 aa).

The Lumenal segment spans residues 1 to 35 (MEAIAKLIKVQLPNYLQKLPVPSSLSGFAELSPSD). A helical membrane pass occupies residues 36 to 59 (AIAVVFPFAVVSWLIGYSTYKFFQ). Residues 60–140 (PKAVELPPSP…GPLIVKGKAN (81 aa)) are Cytoplasmic-facing. Cys104, Cys106, Cys115, and His119 together coordinate [2Fe-2S] cluster.

The protein belongs to the CISD protein family. CISD2 subfamily. [2Fe-2S] cluster is required as a cofactor.

Its subcellular location is the endoplasmic reticulum membrane. In Trichoplax adhaerens (Trichoplax reptans), this protein is CDGSH iron-sulfur domain-containing protein 2 homolog.